Here is a 69-residue protein sequence, read N- to C-terminus: U-Asilidin(12)-Dg3a (69 aa).

Positions 1–19 (MRFLNIFLFFAAIIAFATA) are cleaved as a signal peptide. Residues 20–33 (SQVFEEDEIDMEPR) constitute a propeptide that is removed on maturation. 3 cysteine pairs are disulfide-bonded: cysteine 36–cysteine 59, cysteine 45–cysteine 65, and cysteine 49–cysteine 67.

It belongs to the asilidin-12 family. In terms of tissue distribution, expressed by the venom gland.

The protein resides in the secreted. Functionally, moderately increases Kv11.1/KCNH2/ERG1 currents and shifts the voltage-dependence of the channel activation to hyperpolarised potentials. In vivo, induces neurotoxic effects when injected into insects (tested on L.cuprina and A.domesticus). This Dolopus genitalis (Giant Australian assassin fly) protein is U-Asilidin(12)-Dg3a.